A 408-amino-acid polypeptide reads, in one-letter code: NADH-quinone oxidoreductase subunit D (408 aa).

Belongs to the complex I 49 kDa subunit family. In terms of assembly, NDH-1 is composed of 14 different subunits. Subunits NuoB, C, D, E, F, and G constitute the peripheral sector of the complex.

The protein localises to the cell inner membrane. It catalyses the reaction a quinone + NADH + 5 H(+)(in) = a quinol + NAD(+) + 4 H(+)(out). NDH-1 shuttles electrons from NADH, via FMN and iron-sulfur (Fe-S) centers, to quinones in the respiratory chain. The immediate electron acceptor for the enzyme in this species is believed to be ubiquinone. Couples the redox reaction to proton translocation (for every two electrons transferred, four hydrogen ions are translocated across the cytoplasmic membrane), and thus conserves the redox energy in a proton gradient. This Campylobacter jejuni subsp. jejuni serotype O:23/36 (strain 81-176) protein is NADH-quinone oxidoreductase subunit D.